The sequence spans 221 residues: Interleukin-12 subunit alpha (221 aa).

Residues 1 to 25 form the signal peptide; sequence MCPLRSLLLISTLVLLHHLPHLSLG. 3 disulfides stabilise this stretch: cysteine 39/cysteine 112, cysteine 66/cysteine 198, and cysteine 87/cysteine 125. Asparagine 95 is a glycosylation site (N-linked (GlcNAc...) asparagine).

It belongs to the IL-6 superfamily. As to quaternary structure, heterodimer with IL12B; disulfide-linked. This heterodimer is known as interleukin IL-12. Heterodimer with EBI3/IL27B; not disulfide-linked. This heterodimer is known as interleukin IL-35. Interacts with NBR1; this interaction promotes IL-12 secretion.

It localises to the secreted. Heterodimerizes with IL12B to form the IL-12 cytokine or with EBI3/IL27B to form the IL-35 cytokine. IL-12 is primarily produced by professional antigen-presenting cells (APCs) such as B-cells and dendritic cells (DCs) as well as macrophages and granulocytes and regulates T-cell and natural killer-cell responses, induces the production of interferon-gamma (IFN-gamma), favors the differentiation of T-helper 1 (Th1) cells and is an important link between innate resistance and adaptive immunity. Mechanistically, exerts its biological effects through a receptor composed of IL12R1 and IL12R2 subunits. Binding to the receptor results in the rapid tyrosine phosphorylation of a number of cellular substrates including the JAK family kinases TYK2 and JAK2. In turn, recruited STAT4 gets phosphorylated and translocates to the nucleus where it regulates cytokine/growth factor responsive genes. As part of IL-35, plays essential roles in maintaining the immune homeostasis of the liver microenvironment and also functions as an immune-suppressive cytokine. Mediates biological events through unconventional receptors composed of IL12RB2 and gp130/IL6ST heterodimers or homodimers. Signaling requires the transcription factors STAT1 and STAT4, which form a unique heterodimer that binds to distinct DNA sites. The chain is Interleukin-12 subunit alpha (IL12A) from Bos taurus (Bovine).